A 160-amino-acid chain; its full sequence is Nitrate reductase [NADH] (160 aa).

T37 contributes to the FAD binding site.

The protein belongs to the nitrate reductase family. As to quaternary structure, homodimer. The cofactor is FAD. Heme is required as a cofactor. Requires Mo-molybdopterin as cofactor.

It carries out the reaction nitrite + NAD(+) + H2O = nitrate + NADH + H(+). Functionally, nitrate reductase is a key enzyme involved in the first step of nitrate assimilation in plants, fungi and bacteria. In Lotus tetragonolobus (Winged pea), this protein is Nitrate reductase [NADH] (NIA).